Consider the following 491-residue polypeptide: Ketol-acid reductoisomerase (NADP(+)) (491 aa).

One can recognise a KARI N-terminal Rossmann domain in the interval 15 to 208 (AQLGTCRFME…GGHRAGVLES (194 aa)). Residues 45-48 (CGAQ), arginine 68, arginine 76, serine 78, and 108-110 (DKQ) contribute to the NADP(+) site. Histidine 132 is a catalytic residue. Glycine 158 contacts NADP(+). KARI C-terminal knotted domains lie at 209–353 (SFVA…KEQE) and 354–486 (YFDK…MTAM). Mg(2+) contacts are provided by aspartate 217, glutamate 221, glutamate 389, and glutamate 393. Residue serine 414 coordinates substrate.

The protein belongs to the ketol-acid reductoisomerase family. Mg(2+) serves as cofactor.

It carries out the reaction (2R)-2,3-dihydroxy-3-methylbutanoate + NADP(+) = (2S)-2-acetolactate + NADPH + H(+). The catalysed reaction is (2R,3R)-2,3-dihydroxy-3-methylpentanoate + NADP(+) = (S)-2-ethyl-2-hydroxy-3-oxobutanoate + NADPH + H(+). Its pathway is amino-acid biosynthesis; L-isoleucine biosynthesis; L-isoleucine from 2-oxobutanoate: step 2/4. It participates in amino-acid biosynthesis; L-valine biosynthesis; L-valine from pyruvate: step 2/4. Its function is as follows. Involved in the biosynthesis of branched-chain amino acids (BCAA). Catalyzes an alkyl-migration followed by a ketol-acid reduction of (S)-2-acetolactate (S2AL) to yield (R)-2,3-dihydroxy-isovalerate. In the isomerase reaction, S2AL is rearranged via a Mg-dependent methyl migration to produce 3-hydroxy-3-methyl-2-ketobutyrate (HMKB). In the reductase reaction, this 2-ketoacid undergoes a metal-dependent reduction by NADPH to yield (R)-2,3-dihydroxy-isovalerate. This is Ketol-acid reductoisomerase (NADP(+)) from Christiangramia forsetii (strain DSM 17595 / CGMCC 1.15422 / KT0803) (Gramella forsetii).